The following is a 142-amino-acid chain: Phosphoribosyl-AMP cyclohydrolase (142 aa).

Position 92 (Asp-92) interacts with Mg(2+). Cys-93 is a binding site for Zn(2+). Residues Asp-94 and Asp-96 each coordinate Mg(2+). Zn(2+) is bound by residues Cys-109 and Cys-116.

It belongs to the PRA-CH family. In terms of assembly, homodimer. Requires Mg(2+) as cofactor. Zn(2+) serves as cofactor.

The protein localises to the cytoplasm. The enzyme catalyses 1-(5-phospho-beta-D-ribosyl)-5'-AMP + H2O = 1-(5-phospho-beta-D-ribosyl)-5-[(5-phospho-beta-D-ribosylamino)methylideneamino]imidazole-4-carboxamide. The protein operates within amino-acid biosynthesis; L-histidine biosynthesis; L-histidine from 5-phospho-alpha-D-ribose 1-diphosphate: step 3/9. Functionally, catalyzes the hydrolysis of the adenine ring of phosphoribosyl-AMP. This is Phosphoribosyl-AMP cyclohydrolase from Alkalilimnicola ehrlichii (strain ATCC BAA-1101 / DSM 17681 / MLHE-1).